Reading from the N-terminus, the 155-residue chain is Small ribosomal subunit protein uS7 (155 aa).

The protein belongs to the universal ribosomal protein uS7 family. In terms of assembly, part of the 30S ribosomal subunit. Contacts proteins S9 and S11.

Its function is as follows. One of the primary rRNA binding proteins, it binds directly to 16S rRNA where it nucleates assembly of the head domain of the 30S subunit. Is located at the subunit interface close to the decoding center, probably blocks exit of the E-site tRNA. The chain is Small ribosomal subunit protein uS7 from Petrotoga mobilis (strain DSM 10674 / SJ95).